A 470-amino-acid polypeptide reads, in one-letter code: Uronate isomerase (470 aa).

This sequence belongs to the metallo-dependent hydrolases superfamily. Uronate isomerase family.

It catalyses the reaction D-glucuronate = D-fructuronate. It carries out the reaction aldehydo-D-galacturonate = keto-D-tagaturonate. It participates in carbohydrate metabolism; pentose and glucuronate interconversion. The sequence is that of Uronate isomerase from Klebsiella pneumoniae (strain 342).